Consider the following 335-residue polypeptide: Phosphatidylcholine:ceramide cholinephosphotransferase 2 (335 aa).

5 helical membrane passes run 60 to 80 (LTAF…LTVI), 104 to 124 (WSVG…IIFL), 136 to 156 (FLLG…TFLP), 200 to 220 (ILCG…MYFV), and 229 to 249 (LVIL…ALVV). Residue histidine 210 is part of the active site. Catalysis depends on residues histidine 253 and aspartate 257. The helical transmembrane segment at 258–278 (VLIAYWLTSHVFWSYHQIFEM) threads the bilayer. The Cytoplasmic segment spans residues 279–335 (RKDDRPQAPLSRLWWFWLCYWFESDVADGKLVNKWNWPLEGPQRMHTIMNRINYKLQ).

The protein belongs to the sphingomyelin synthase family.

Its subcellular location is the membrane. The enzyme catalyses an N-acylsphing-4-enine + a 1,2-diacyl-sn-glycero-3-phosphocholine = a sphingomyelin + a 1,2-diacyl-sn-glycerol. It carries out the reaction an N-acyl-15-methylhexadecasphing-4-enine + a 1,2-diacyl-sn-glycero-3-phosphocholine = an N-acyl-15-methylhexadecasphing-4-enine-1-phosphocholine + a 1,2-diacyl-sn-glycerol. The protein operates within lipid metabolism; sphingolipid metabolism. Sphingomyelin synthases (SM synthase or SMS) synthesize the sphingolipid sphingomyelin (SM) through transfer of the phosphatidyl head group of 1,2-diacyl-sn-glycero-3-phosphocholine (phosphatidylcholine, PC) on to the primary hydroxyl of ceramide (N-acylsphingoid base), yielding 1,2-diacyl-sn-glycerol (diacylglycerol, DAG) as a side product. Functions as a bidirectional lipid cholinephosphotransferases capable of converting PC and ceramide to SM and DAG and vice versa depending on the respective levels of ceramide and DAG as phosphocholine acceptors, respectively. The polypeptide is Phosphatidylcholine:ceramide cholinephosphotransferase 2 (sms-2) (Caenorhabditis elegans).